Here is a 426-residue protein sequence, read N- to C-terminus: Serine--tRNA ligase (426 aa).

233-235 (TAE) lines the L-serine pocket. 264-266 (RSE) contributes to the ATP binding site. Glutamate 287 lines the L-serine pocket. ATP is bound at residue 351-354 (EISS). Serine 387 contributes to the L-serine binding site.

Belongs to the class-II aminoacyl-tRNA synthetase family. Type-1 seryl-tRNA synthetase subfamily. Homodimer. The tRNA molecule binds across the dimer.

It localises to the cytoplasm. It catalyses the reaction tRNA(Ser) + L-serine + ATP = L-seryl-tRNA(Ser) + AMP + diphosphate + H(+). The enzyme catalyses tRNA(Sec) + L-serine + ATP = L-seryl-tRNA(Sec) + AMP + diphosphate + H(+). Its pathway is aminoacyl-tRNA biosynthesis; selenocysteinyl-tRNA(Sec) biosynthesis; L-seryl-tRNA(Sec) from L-serine and tRNA(Sec): step 1/1. Functionally, catalyzes the attachment of serine to tRNA(Ser). Is also able to aminoacylate tRNA(Sec) with serine, to form the misacylated tRNA L-seryl-tRNA(Sec), which will be further converted into selenocysteinyl-tRNA(Sec). The polypeptide is Serine--tRNA ligase (Azotobacter vinelandii (strain DJ / ATCC BAA-1303)).